Here is a 382-residue protein sequence, read N- to C-terminus: Alkanesulfonate monooxygenase (382 aa).

It belongs to the SsuD family. Homotetramer.

The enzyme catalyses an alkanesulfonate + FMNH2 + O2 = an aldehyde + FMN + sulfite + H2O + 2 H(+). Catalyzes the desulfonation of aliphatic sulfonates. This Yersinia pestis bv. Antiqua (strain Antiqua) protein is Alkanesulfonate monooxygenase.